Here is a 155-residue protein sequence, read N- to C-terminus: Small ribosomal subunit protein uS7cz/uS7cy (155 aa).

Component of the chloroplast small ribosomal subunit (SSU). Mature 70S chloroplast ribosomes of higher plants consist of a small (30S) and a large (50S) subunit. The 30S small subunit contains 1 molecule of ribosomal RNA (16S rRNA) and 24 different proteins. The 50S large subunit contains 3 rRNA molecules (23S, 5S and 4.5S rRNA) and 33 different proteins.

The protein resides in the plastid. Its subcellular location is the chloroplast. Component of the chloroplast ribosome (chloro-ribosome), a dedicated translation machinery responsible for the synthesis of chloroplast genome-encoded proteins, including proteins of the transcription and translation machinery and components of the photosynthetic apparatus. The chain is Small ribosomal subunit protein uS7cz/uS7cy (rps7-A) from Spinacia oleracea (Spinach).